Consider the following 754-residue polypeptide: 5-methyltetrahydropteroyltriglutamate--homocysteine methyltransferase (754 aa).

5-methyltetrahydropteroyltri-L-glutamate contacts are provided by residues 16–19 (RELK) and lysine 114. L-homocysteine is bound by residues 430 to 432 (IGS) and glutamate 483. L-methionine-binding positions include 430–432 (IGS) and glutamate 483. 5-methyltetrahydropteroyltri-L-glutamate-binding positions include 514–515 (RC) and tryptophan 560. Aspartate 598 is a binding site for L-homocysteine. Residue aspartate 598 participates in L-methionine binding. A 5-methyltetrahydropteroyltri-L-glutamate-binding site is contributed by glutamate 604. The Zn(2+) site is built by histidine 640, cysteine 642, and glutamate 664. The Proton donor role is filled by histidine 693. Residue cysteine 725 participates in Zn(2+) binding.

Belongs to the vitamin-B12 independent methionine synthase family. The cofactor is Zn(2+).

It catalyses the reaction 5-methyltetrahydropteroyltri-L-glutamate + L-homocysteine = tetrahydropteroyltri-L-glutamate + L-methionine. It participates in amino-acid biosynthesis; L-methionine biosynthesis via de novo pathway; L-methionine from L-homocysteine (MetE route): step 1/1. Functionally, catalyzes the transfer of a methyl group from 5-methyltetrahydrofolate to homocysteine resulting in methionine formation. This is 5-methyltetrahydropteroyltriglutamate--homocysteine methyltransferase from Aeromonas salmonicida (strain A449).